Consider the following 324-residue polypeptide: Probable nicotianamine synthase 4 (324 aa).

Belongs to the nicotianamine synthase (NAS)-like family.

It catalyses the reaction 3 S-adenosyl-L-methionine = nicotianamine + 3 S-methyl-5'-thioadenosine + 3 H(+). Functionally, synthesizes nicotianamine, a polyamine which serves as a sensor for the physiological iron status within the plant, and/or might be involved in the transport of iron. The sequence is that of Probable nicotianamine synthase 4 (NAS4) from Arabidopsis thaliana (Mouse-ear cress).